A 176-amino-acid polypeptide reads, in one-letter code: Conjugal transfer protein TraF (176 aa).

Positions 1 to 24 are cleaved as a signal peptide; it reads MSKRAVIRFLGVAGLVLSGATVMG.

This sequence belongs to the peptidase S26C family.

The protein localises to the periplasm. Functionally, involved in conjugal transfer of the plasmid. The polypeptide is Conjugal transfer protein TraF (traF) (Agrobacterium fabrum (strain C58 / ATCC 33970) (Agrobacterium tumefaciens (strain C58))).